The chain runs to 383 residues: Putative glutamate--cysteine ligase 2 (383 aa).

It belongs to the glutamate--cysteine ligase type 2 family. YbdK subfamily.

It catalyses the reaction L-cysteine + L-glutamate + ATP = gamma-L-glutamyl-L-cysteine + ADP + phosphate + H(+). In terms of biological role, ATP-dependent carboxylate-amine ligase which exhibits weak glutamate--cysteine ligase activity. The chain is Putative glutamate--cysteine ligase 2 from Clavibacter michiganensis subsp. michiganensis (strain NCPPB 382).